A 500-amino-acid chain; its full sequence is NAD(P)H-quinone oxidoreductase chain 4, chloroplastic (500 aa).

Helical transmembrane passes span phenylalanine 4 to leucine 24, leucine 31 to phenylalanine 51, isoleucine 87 to valine 107, leucine 113 to serine 130, leucine 134 to methionine 154, phenylalanine 167 to leucine 187, alanine 208 to isoleucine 228, histidine 242 to valine 262, alanine 272 to alanine 292, isoleucine 305 to aspartate 325, glycine 330 to glycine 350, leucine 386 to threonine 406, isoleucine 416 to methionine 436, and leucine 462 to valine 482.

This sequence belongs to the complex I subunit 4 family.

The protein localises to the plastid. The protein resides in the chloroplast thylakoid membrane. The enzyme catalyses a plastoquinone + NADH + (n+1) H(+)(in) = a plastoquinol + NAD(+) + n H(+)(out). It catalyses the reaction a plastoquinone + NADPH + (n+1) H(+)(in) = a plastoquinol + NADP(+) + n H(+)(out). This chain is NAD(P)H-quinone oxidoreductase chain 4, chloroplastic, found in Gossypium barbadense (Sea Island cotton).